A 323-amino-acid chain; its full sequence is MGNLLKVLTREIENYPHFFLDFENAQPTEGEREIWNQISAVLQDSESILADLQAYKGAGPEIRDAIQNPNDIQLQEKAWNAVCPLVVRLKRFYEFSIRLEKALQSLLESLTCPPYTPTQHLEREQALAKEFAEILHFTLRFDELKMRNPAIQNDFSYYRRTISRNRINNMHLDIENEVNNEMANRMSLFYAEATPMLKTLSNATMHFVSENKTLPIENTTDCLSTMTSVCKVMLETPEYRSRFTSEETLMFCMRVMVGVIILYDHVHPVGAFCKTSKIDMKGCIKVLKEQAPDSVEGLLNALRFTTKHLNDESTSKQIRAMLQ.

The protein belongs to the CYRI family. Interacts with RAC1 (GTP-bound form preferentially).

The protein resides in the membrane. In terms of biological role, may negatively regulate RAC1 signaling and RAC1-driven cytoskeletal remodeling. May regulate chemotaxis, cell migration and epithelial polarization by controlling the polarity, plasticity, duration and extent of protrusions. This Bos taurus (Bovine) protein is CYFIP-related Rac1 interactor A (CYRIA).